A 293-amino-acid polypeptide reads, in one-letter code: MITVYFIGTGGGAPNKRGLPAIMVRREGFDALFDCGEGTQWRMMEHNLSFMKIKLIGITHMHGDHVLGLPGMIETMGMYSRKESLLLMGPKELKEFLEDIFKKTYFYPNFEIQIIDKYEDENIKISTFETCHTIESQGYLFEEKDRLKIDIDKLRKEGIKDWRIIRMLKEGKRVEINGKVLLPEDYLIVKKGIRIAYTGDTGPCEKVINAVKDVDLLIHDSTFIDEKEAYKYGHSNSYDAAYVALKANVKRLALFHISPRYDDTYEMLIKAKRIFEKTFVAEPLSYYIIRQKE.

Residues histidine 60, histidine 62, aspartate 64, histidine 65, histidine 132, aspartate 200, and histidine 256 each coordinate Zn(2+). Catalysis depends on aspartate 64, which acts as the Proton acceptor.

Belongs to the RNase Z family. As to quaternary structure, homodimer. It depends on Zn(2+) as a cofactor.

It carries out the reaction Endonucleolytic cleavage of RNA, removing extra 3' nucleotides from tRNA precursor, generating 3' termini of tRNAs. A 3'-hydroxy group is left at the tRNA terminus and a 5'-phosphoryl group is left at the trailer molecule.. Zinc phosphodiesterase, which displays some tRNA 3'-processing endonuclease activity. Probably involved in tRNA maturation, by removing a 3'-trailer from precursor tRNA. The chain is Ribonuclease Z from Sulfurisphaera tokodaii (strain DSM 16993 / JCM 10545 / NBRC 100140 / 7) (Sulfolobus tokodaii).